The chain runs to 138 residues: Basic phospholipase A2 Pla2Vb (138 aa).

An N-terminal signal peptide occupies residues 1–16 (MRTLWIVAVWLMGVEG). 7 disulfides stabilise this stretch: C42–C131, C44–C60, C59–C111, C65–C138, C66–C104, C73–C97, and C91–C102. Y43, G45, and G47 together coordinate Ca(2+). The active site involves H63. D64 contributes to the Ca(2+) binding site. D105 is a catalytic residue.

Belongs to the phospholipase A2 family. Group II subfamily. D49 sub-subfamily. Ca(2+) is required as a cofactor. As to expression, expressed by the venom gland.

Its subcellular location is the secreted. The enzyme catalyses a 1,2-diacyl-sn-glycero-3-phosphocholine + H2O = a 1-acyl-sn-glycero-3-phosphocholine + a fatty acid + H(+). In terms of biological role, snake venom phospholipase A2 (PLA2) that exhibits medium anticoagulant effects by binding to factor Xa (F10) and inhibiting the prothrombinase activity (IC(50) is 90 nM). PLA2 catalyzes the calcium-dependent hydrolysis of the 2-acyl groups in 3-sn-phosphoglycerides. The sequence is that of Basic phospholipase A2 Pla2Vb from Vipera berus berus (Common viper).